The primary structure comprises 319 residues: 8-methylmenaquinol:fumarate reductase iron-sulfur subunit (319 aa).

The region spanning 1–96 is the 2Fe-2S ferredoxin-type domain; the sequence is MKFIIDRFDG…TFRISPLGNH (96 aa). Residues C51, C56, C59, and C71 each contribute to the [2Fe-2S] cluster site. 2 4Fe-4S ferredoxin-type domains span residues 139–168 and 193–224; these read FDRI…QSDY and VKPA…AEDI. [4Fe-4S] cluster-binding residues include C148, C151, C154, C158, C204, C207, C210, and C214.

This sequence belongs to the succinate dehydrogenase/fumarate reductase iron-sulfur protein family. As to quaternary structure, the MFR complex is composed of three subunits: a flavoprotein (SdhA), an iron-sulfur protein (SdhB), and one hydrophobic anchor protein (SdhE). [2Fe-2S] cluster serves as cofactor. It depends on [4Fe-4S] cluster as a cofactor.

The protein localises to the periplasm. It localises to the cell membrane. The enzyme catalyses 8-methylmenaquinone-6 + succinate = 8-methylmenaquinol-6 + fumarate. Its function is as follows. Iron-sulfur subunit of 8-methylmenaquinol:fumarate reductase (MFR), that catalyzes the reduction of fumarate using 8-methylmenaquinol-6 as electron donor. The complex shows no succinate oxidation activity. Is involved in anaerobic metabolism. The sequence is that of 8-methylmenaquinol:fumarate reductase iron-sulfur subunit from Wolinella succinogenes (strain ATCC 29543 / DSM 1740 / CCUG 13145 / JCM 31913 / LMG 7466 / NCTC 11488 / FDC 602W) (Vibrio succinogenes).